The primary structure comprises 547 residues: Agglutinin-1 (547 aa).

Positions 1–20 (MKFETTKNKLHGNAYYQAQF) are cleaved as a signal peptide. Q21 is modified (pyrrolidone carboxylic acid). Residue E183 is part of the active site. Cystine bridges form between C266/C288, C305/C324, and C348/C365. The propeptide at 279 to 280 (RS) is linker peptide. Residues 292–419 (YEPTVRIGGR…YRMRQGWRTG (128 aa)) enclose the Ricin B-type lectin 1 domain. A 1-alpha repeat occupies 302-344 (DGLCVDVSDNAYNNGNPIILWKCKDQLEVNQLWTLKSDKTIRS). The stretch at 345–385 (KGKCLTTYGYAPGNYVMIYDCSSAVAEATYWDIWDNGTIIN) is one 1-beta repeat. N-linked (GlcNAc...) asparagine glycosylation is found at N380 and N420. One copy of the 1-gamma repeat lies at 388–420 (SGLVLSAESSSMGGTLTVQKNDYRMRQGWRTGN). The Ricin B-type lectin 2 domain maps to 422 to 546 (TSPFVTSIAG…GNANQMWATL (125 aa)). A 2-alpha repeat occupies 433 to 468 (FKLCMEAHGNSMWLDVCDITKEEQQWAVYPDGSIRP). 2 disulfide bridges follow: C436-C449 and C475-C492. The stretch at 472–511 (TNNCLTCEEHKQGATIVMMGCSNAWASQRWVFKSDGTIYN) is one 2-beta repeat. One copy of the 2-gamma repeat lies at 514-547 (DDMVMDVKSSDPSLKQIILWPYTGNANQMWATLF).

In the N-terminal section; belongs to the ribosome-inactivating protein family. Type 2 RIP subfamily. In terms of assembly, heterotetramer of two A and two B chains.

It catalyses the reaction Endohydrolysis of the N-glycosidic bond at one specific adenosine on the 28S rRNA.. Its function is as follows. The A chain is responsible for inhibiting protein synthesis through the catalytic inactivation of 60S ribosomal subunits by removing adenine from position 4,324 of 28S rRNA. Less toxic than abrin-a. The B chain is a galactose-specific lectin that facilitates the binding to the cell membrane that precedes endocytosis. The chain is Agglutinin-1 from Abrus precatorius (Indian licorice).